The sequence spans 147 residues: Protein AfaD (147 aa).

A signal peptide spans 1–26; it reads MNGSIRKMMRVTCGMLLMVMSGVSQA. The interval 91 to 111 is disordered; the sequence is RTGGDGWSPVKGEGGKGVSRP.

It to E.coli AggB.

In Escherichia coli, this protein is Protein AfaD (afaD).